We begin with the raw amino-acid sequence, 130 residues long: MNLIAKLEQEEIERALAGKTIPEFAPGDTVIVNVNVVEGNRKRVQAYEGVVIAIRNRGLNSNFIVRKISSGEGVERTFQTYSPLLASIVVKRRGDVRRAKLYYLRERSGKSARIKEKLVSKDRTAAASQE.

The protein belongs to the bacterial ribosomal protein bL19 family.

In terms of biological role, this protein is located at the 30S-50S ribosomal subunit interface and may play a role in the structure and function of the aminoacyl-tRNA binding site. This chain is Large ribosomal subunit protein bL19, found in Burkholderia vietnamiensis (strain G4 / LMG 22486) (Burkholderia cepacia (strain R1808)).